Here is a 405-residue protein sequence, read N- to C-terminus: Formate-dependent phosphoribosylglycinamide formyltransferase (405 aa).

N(1)-(5-phospho-beta-D-ribosyl)glycinamide contacts are provided by residues 27–28 and Glu87; that span reads EL. Residues Arg120, Lys162, 167 to 172, 202 to 205, and Glu210 each bind ATP; these read SSGKGQ and EGFI. The 196-residue stretch at 125–320 folds into the ATP-grasp domain; that stretch reads RLAAETLGLP…EFELHARALL (196 aa). The Mg(2+) site is built by Glu279 and Glu291. Residues Asp298, Lys367, and 374-375 contribute to the N(1)-(5-phospho-beta-D-ribosyl)glycinamide site; that span reads RR.

It belongs to the PurK/PurT family. As to quaternary structure, homodimer.

It catalyses the reaction N(1)-(5-phospho-beta-D-ribosyl)glycinamide + formate + ATP = N(2)-formyl-N(1)-(5-phospho-beta-D-ribosyl)glycinamide + ADP + phosphate + H(+). Its pathway is purine metabolism; IMP biosynthesis via de novo pathway; N(2)-formyl-N(1)-(5-phospho-D-ribosyl)glycinamide from N(1)-(5-phospho-D-ribosyl)glycinamide (formate route): step 1/1. In terms of biological role, involved in the de novo purine biosynthesis. Catalyzes the transfer of formate to 5-phospho-ribosyl-glycinamide (GAR), producing 5-phospho-ribosyl-N-formylglycinamide (FGAR). Formate is provided by PurU via hydrolysis of 10-formyl-tetrahydrofolate. This chain is Formate-dependent phosphoribosylglycinamide formyltransferase, found in Bordetella avium (strain 197N).